A 381-amino-acid chain; its full sequence is (S)-scoulerine 9-O-methyltransferase (381 aa).

S-adenosyl-L-methionine contacts are provided by Gly223, Glu246, Asp266, Met267, and Lys280. The active-site Proton acceptor is the His284.

This sequence belongs to the class I-like SAM-binding methyltransferase superfamily. Cation-independent O-methyltransferase family. COMT subfamily.

It carries out the reaction (S)-scoulerine + S-adenosyl-L-methionine = (S)-tetrahydrocolumbamine + S-adenosyl-L-homocysteine + H(+). Produces a precursor of protoberberine alkaloids. This chain is (S)-scoulerine 9-O-methyltransferase (SMT), found in Coptis japonica (Japanese goldthread).